Consider the following 653-residue polypeptide: Testicular spindle-associated protein SHCBP1L (653 aa).

The segment at 1–65 (MASGSKASVP…PVKGKAGRET (65 aa)) is disordered. Ser8 is modified (phosphoserine). The segment covering 28–41 (SAVSGDTAAATTLK) has biased composition (polar residues). Residues 46–56 (PVRSVVASPRP) are compositionally biased toward low complexity. At Ser53 the chain carries Phosphoserine. Positions 299 to 326 (IAQRFKKTLEKYKNKRVELIEYQSNIKE) form a coiled coil. PbH1 repeat units lie at residues 493–514 (SGHMTLENCILKCEGTGVCVLT), 515–537 (GAALTITDSEITGAQGAGVELYP), 538–571 (GSIAILERNEIHHCNNLRTSNSSKSTLGGVNMKV), and 574–596 (APKLKMTNNHIYSNKGYGVSILQ). Lys570 is modified (N6-acetyllysine). Position 645 is an N6-acetyllysine (Lys645).

In terms of assembly, interacts with HSPA2; this interaction may promote the recruitment of HSPA2 to the spindle. As to expression, expressed in spermatocytes and elongating spermatids inside the seminiferous tubules (at protein level). Testis-specific.

It is found in the cytoplasm. Its subcellular location is the cytoskeleton. It localises to the spindle. Its function is as follows. Testis-specific spindle-associated factor that plays a role in spermatogenesis. In association with HSPA2, participates in the maintenance of spindle integrity during meiosis in male germ cells. In Homo sapiens (Human), this protein is Testicular spindle-associated protein SHCBP1L.